A 782-amino-acid polypeptide reads, in one-letter code: E3 UFM1-protein ligase 1 homolog (782 aa).

A disordered region spans residues 404 to 477; that stretch reads NASTQELEDD…GSRGGGGVNK (74 aa). Positions 443–453 are enriched in basic residues; it reads KSTKKHQRGKA.

It belongs to the UFL1 family.

Its function is as follows. E3 UFM1-protein ligase that mediates ufmylation of target proteins. The polypeptide is E3 UFM1-protein ligase 1 homolog (Drosophila erecta (Fruit fly)).